The sequence spans 38 residues: Large ribosomal subunit protein bL36 (38 aa).

Belongs to the bacterial ribosomal protein bL36 family.

This chain is Large ribosomal subunit protein bL36, found in Mycoplasma mobile (strain ATCC 43663 / 163K / NCTC 11711) (Mesomycoplasma mobile).